The primary structure comprises 505 residues: One cut domain family member 2 (505 aa).

3 disordered regions span residues 29-94 (LGTL…GTAA), 165-190 (KFHH…RLSG), and 275-333 (EQHL…QLEE). Gly residues predominate over residues 35–56 (PVGGGSGGGGGGGGGGGGGGPG). The span at 167 to 187 (HHPHPHHHPHHHHHHHHHHQR) shows a compositional bias: basic residues. Residues 325 to 411 (VATSGQLEEI…QRMSALRLAA (87 aa)) constitute a DNA-binding region (CUT). A DNA-binding region (homeobox) is located at residues 427 to 486 (QKKSRLVFTDLQRRTLFAIFKENKRPSKEMQITISQQLGLELTTVSNFFMNARRRSLEKW).

Belongs to the CUT homeobox family.

It localises to the nucleus. In terms of biological role, transcriptional activator. Activates the transcription of a number of liver genes such as HNF3B. This Mus musculus (Mouse) protein is One cut domain family member 2 (Onecut2).